Reading from the N-terminus, the 309-residue chain is Taste receptor type 2 member 46 (309 aa).

Met1 is a topological domain (extracellular). Residues 2 to 22 (ITFLPIIFSILIVVTFVIGNF) form a helical membrane-spanning segment. Residues 23-46 (ANGFIALANSIEWFKRQKISFADQ) are Cytoplasmic-facing. A helical transmembrane segment spans residues 47–67 (ILTALAVSRVGLLWVLLLNWY). Residues 68–86 (ATELNPAFYSIEVRITAYN) are Extracellular-facing. Residues 87–107 (LWAVINHFSNWLATSLSIFYL) form a helical membrane-spanning segment. At 108-126 (LKIANFSNLIFLRLKRRVK) the chain is on the cytoplasmic side. The helical transmembrane segment at 127-147 (SVVLVILLGPLLFLVCHLFVI) threads the bilayer. Residues 148-178 (NMNQIIWTKEYEGNMTWKIKLRSAMYLSNIT) are Extracellular-facing. Asn161 and Asn176 each carry an N-linked (GlcNAc...) asparagine glycan. Residues 179–199 (VTILANLVPFTLTLISFLLLI) traverse the membrane as a helical segment. Residues 200 to 229 (CSLCKHLKKMQLHGKGSQDPSMKVHIKALQ) are Cytoplasmic-facing. A helical transmembrane segment spans residues 230-250 (TVTSFLLLCAIYFLSIIMSVW). Residues 251-259 (SFESLENKP) are Extracellular-facing. The helical transmembrane segment at 260–280 (VFMFCEAITFSYPSTHPFILI) threads the bilayer. Over 281-309 (WGNKKLKQTFLSVLWHVRYWVKGEEPSSP) the chain is Cytoplasmic.

This sequence belongs to the G-protein coupled receptor T2R family.

It is found in the membrane. The protein resides in the cell projection. Its subcellular location is the cilium membrane. Receptor that may play a role in the perception of bitterness and is gustducin-linked. May play a role in sensing the chemical composition of the gastrointestinal content. The activity of this receptor may stimulate alpha gustducin, mediate PLC-beta-2 activation and lead to the gating of TRPM5. In airway epithelial cells, binding of bitter compounds increases the intracellular calcium ion concentration and stimulates ciliary beat frequency. The chain is Taste receptor type 2 member 46 (TAS2R46) from Pan paniscus (Pygmy chimpanzee).